Consider the following 231-residue polypeptide: MSVGVWAVIPAAGRGVRFGSPVPKQYLPVVGRPLIVYTLEALAAHPAVCGLMVVVAEGDLAWSSWTEVAGKPLLTCSGGVTRAASVLSGLLALPQVVHADDFVLVHDAARPNVALSDLERLLEAGCAHPVGAILAVPVRDTLKRAGADGSIDGTEPRERLWRAFTPQLFRRSQLVRGLQVAAADGIEITDEAMVMERQGLRPLLVECAESNFKITTPDDLVRFEFELARRV.

It belongs to the IspD/TarI cytidylyltransferase family. IspD subfamily.

The enzyme catalyses 2-C-methyl-D-erythritol 4-phosphate + CTP + H(+) = 4-CDP-2-C-methyl-D-erythritol + diphosphate. It functions in the pathway isoprenoid biosynthesis; isopentenyl diphosphate biosynthesis via DXP pathway; isopentenyl diphosphate from 1-deoxy-D-xylulose 5-phosphate: step 2/6. Functionally, catalyzes the formation of 4-diphosphocytidyl-2-C-methyl-D-erythritol from CTP and 2-C-methyl-D-erythritol 4-phosphate (MEP). The polypeptide is 2-C-methyl-D-erythritol 4-phosphate cytidylyltransferase (Xylella fastidiosa (strain 9a5c)).